The following is a 206-amino-acid chain: Small ribosomal subunit protein uS4 (206 aa).

The S4 RNA-binding domain occupies 96–156 (GRLDNVVYRM…EKAKKQSRVK (61 aa)).

It belongs to the universal ribosomal protein uS4 family. In terms of assembly, part of the 30S ribosomal subunit. Contacts protein S5. The interaction surface between S4 and S5 is involved in control of translational fidelity.

Its function is as follows. One of the primary rRNA binding proteins, it binds directly to 16S rRNA where it nucleates assembly of the body of the 30S subunit. With S5 and S12 plays an important role in translational accuracy. The chain is Small ribosomal subunit protein uS4 from Erwinia tasmaniensis (strain DSM 17950 / CFBP 7177 / CIP 109463 / NCPPB 4357 / Et1/99).